Reading from the N-terminus, the 311-residue chain is Mediator of RNA polymerase II transcription subunit 27 (311 aa).

The protein belongs to the Mediator complex subunit 27 family. In terms of assembly, component of the Mediator complex.

The protein localises to the nucleus. Functionally, component of the Mediator complex, a coactivator involved in the regulated transcription of nearly all RNA polymerase II-dependent genes. Mediator functions as a bridge to convey information from gene-specific regulatory proteins to the basal RNA polymerase II transcription machinery. Mediator is recruited to promoters by direct interactions with regulatory proteins and serves as a scaffold for the assembly of a functional preinitiation complex with RNA polymerase II and the general transcription factors. The protein is Mediator of RNA polymerase II transcription subunit 27 (med27) of Xenopus tropicalis (Western clawed frog).